A 763-amino-acid chain; its full sequence is Heat shock 70 kDa protein 16 (763 aa).

Disordered stretches follow at residues I509–G529 and E701–D763. S528 bears the Phosphoserine mark. Over residues E701–N714 the composition is skewed to basic and acidic residues.

The protein belongs to the heat shock protein 70 (TC 1.A.33) family. HSP110/SSE subfamily.

This is Heat shock 70 kDa protein 16 (HSP70-16) from Arabidopsis thaliana (Mouse-ear cress).